A 363-amino-acid polypeptide reads, in one-letter code: Outer membrane porin F (363 aa).

The N-terminal stretch at 1-22 is a signal peptide; sequence MMKRKILAAVIPALLAAATANA. The chain crosses the membrane as a beta stranded span at residues 23-28; it reads AEIYNK. Position 29 (Asp-29) is a topological domain, periplasmic. The chain crosses the membrane as a beta stranded span at residues 30–45; that stretch reads GNKLDLYGKAVGRHVW. The Extracellular portion of the chain corresponds to 46–56; it reads TTTGDSKNADQ. Residues 57-69 form a beta stranded membrane-spanning segment; the sequence is TYAQIGFKGETQI. Over 70-71 the chain is Periplasmic; sequence NT. Residues 72–84 form a beta stranded membrane-spanning segment; sequence DLTGFGQWEYRTK. The Extracellular segment spans residues 85–99; sequence ADRAEGEQQNSNLVR. The beta stranded transmembrane segment at 100–108 threads the bilayer; sequence LAFAGLKYA. A topological domain (periplasmic) is located at residue Glu-109. A beta stranded membrane pass occupies residues 110–117; that stretch reads VGSIDYGR. Residues 118-154 are Extracellular-facing; sequence NYGIVYDVESYTDMAPYFSGETWGGAYTDNYMTSRAG. Residues 155–161 form a beta stranded membrane-spanning segment; it reads GLLTYRN. Topologically, residues 162 to 169 are periplasmic; it reads SDFFGLVD. The beta stranded transmembrane segment at 170-181 threads the bilayer; it reads GLSFGIQYQGKN. Over 182–192 the chain is Extracellular; the sequence is QDNHSINSQNG. The chain crosses the membrane as a beta stranded span at residues 193–203; sequence DGVGYTMAYEF. A topological domain (periplasmic) is located at residue Asp-204. A beta stranded transmembrane segment spans residues 205-217; that stretch reads GFGVTAAYSNSKR. Over 218–230 the chain is Extracellular; it reads TNDQQDRDGNGDR. A beta stranded membrane pass occupies residues 231–242; sequence AESWAVGAKYDA. A topological domain (periplasmic) is located at residue Asn-243. Residues 244–256 form a beta stranded membrane-spanning segment; that stretch reads NVYLAAVYAETRN. The Extracellular segment spans residues 257-272; the sequence is MSIVENTVTDTVEMAN. A beta stranded membrane pass occupies residues 273-285; the sequence is KTQNLEVVAQYQF. Topologically, residues 286-287 are periplasmic; that stretch reads DF. A beta stranded membrane pass occupies residues 288 to 301; the sequence is GLRPAISYVQSKGK. Topologically, residues 302–312 are extracellular; it reads QLNGADGSADL. The beta stranded transmembrane segment at 313–324 threads the bilayer; it reads AKYIQAGATYYF. The Periplasmic portion of the chain corresponds to 325 to 326; it reads NK. The beta stranded transmembrane segment at 327–336 threads the bilayer; that stretch reads NMNVWVDYRF. At 337–353 the chain is on the extracellular side; it reads NLLDENDYSSSYVGTDD. A beta stranded membrane pass occupies residues 354–363; the sequence is QAAVGITYQF.

The protein belongs to the Gram-negative porin family. Homotrimer. Forms mixed heterotrimers with OmpC and with PhoE; other mixed heterotrimers with other porins are also probable.

The protein resides in the cell outer membrane. Functionally, forms pores that allow passive diffusion of small molecules across the outer membrane. In Salmonella typhi, this protein is Outer membrane porin F (ompF).